A 217-amino-acid polypeptide reads, in one-letter code: Somatotropin (217 aa).

An N-terminal signal peptide occupies residues 1 to 26 (MMAAGPRTSLLLAFALLCLPWTQVVG). His46 is a binding site for Zn(2+). A disulfide bond links Cys79 and Cys190. Phosphoserine is present on Ser132. Residue Glu199 coordinates Zn(2+). A disulfide bridge links Cys207 with Cys215.

This sequence belongs to the somatotropin/prolactin family.

It is found in the secreted. Functionally, plays an important role in growth control. Its major role in stimulating body growth is to stimulate the liver and other tissues to secrete IGF1. It stimulates both the differentiation and proliferation of myoblasts. It also stimulates amino acid uptake and protein synthesis in muscle and other tissues. This chain is Somatotropin (GH1), found in Bubalus bubalis (Domestic water buffalo).